A 298-amino-acid polypeptide reads, in one-letter code: Super small secreted glycoprotein (298 aa).

The N-terminal stretch at 1–32 is a signal peptide; it reads MGVTGILQLPRDRFKRTSFFLWVIILFQRTFS. The N-linked (GlcNAc...) asparagine; by host glycan is linked to N40. 2 disulfide bridges follow: C108–C135 and C121–C147. N-linked (GlcNAc...) asparagine; by host glycosylation is found at N204, N228, N238, N257, and N268.

The protein belongs to the filoviruses glycoprotein family.

The protein localises to the secreted. This Epomops franqueti (Franquet's epauletted fruit bat) protein is Super small secreted glycoprotein (GP).